Reading from the N-terminus, the 400-residue chain is Nicotinate phosphoribosyltransferase (400 aa).

His-220 is subject to Phosphohistidine; by autocatalysis.

It belongs to the NAPRTase family. Post-translationally, transiently phosphorylated on a His residue during the reaction cycle. Phosphorylation strongly increases the affinity for substrates and increases the rate of nicotinate D-ribonucleotide production. Dephosphorylation regenerates the low-affinity form of the enzyme, leading to product release.

The enzyme catalyses nicotinate + 5-phospho-alpha-D-ribose 1-diphosphate + ATP + H2O = nicotinate beta-D-ribonucleotide + ADP + phosphate + diphosphate. It participates in cofactor biosynthesis; NAD(+) biosynthesis; nicotinate D-ribonucleotide from nicotinate: step 1/1. Its function is as follows. Catalyzes the synthesis of beta-nicotinate D-ribonucleotide from nicotinate and 5-phospho-D-ribose 1-phosphate at the expense of ATP. The chain is Nicotinate phosphoribosyltransferase from Escherichia fergusonii (strain ATCC 35469 / DSM 13698 / CCUG 18766 / IAM 14443 / JCM 21226 / LMG 7866 / NBRC 102419 / NCTC 12128 / CDC 0568-73).